We begin with the raw amino-acid sequence, 290 residues long: MSRLGNRAADWADDEEFDDPSALPAQQVTTNKDGTKTVVSYRFNDEGKKVKVTRRIKTTVVREHVNPQVAERRSWAKFGLEKGHAAGPSFDTTSVGENIIFRPSVNWRAQAAEAEKAGPEKGSIKDQLKDKKVKCRICSGEHFTARCPFKDTMAPVDETAAAGAEPGAEDVPAAGGLGAGTSSYVPPHLRKGAAAGGERMAGKYEKDDLATLRVTNVSELAEESELRDLFERFGRVTRVFLARDRETQRAKGFAFISFADRTDAARACEKMDGFGYRHLILRVEFAKRAT.

Residues M1 to G34 are disordered. The 79-residue stretch at A210–R288 folds into the RRM domain.

The protein belongs to the eIF-3 subunit G family. In terms of assembly, component of the eukaryotic translation initiation factor 3 (eIF-3) complex.

The protein localises to the cytoplasm. RNA-binding component of the eukaryotic translation initiation factor 3 (eIF-3) complex, which is involved in protein synthesis of a specialized repertoire of mRNAs and, together with other initiation factors, stimulates binding of mRNA and methionyl-tRNAi to the 40S ribosome. The eIF-3 complex specifically targets and initiates translation of a subset of mRNAs involved in cell proliferation. This subunit can bind 18S rRNA. This chain is Eukaryotic translation initiation factor 3 subunit G, found in Neosartorya fischeri (strain ATCC 1020 / DSM 3700 / CBS 544.65 / FGSC A1164 / JCM 1740 / NRRL 181 / WB 181) (Aspergillus fischerianus).